The primary structure comprises 303 residues: Taste receptor type 2 member 13 (303 aa).

At 1–7 the chain is on the extracellular side; it reads MESALPS. The helical transmembrane segment at 8–28 threads the bilayer; sequence IFTLVIIAEFIIGNLSNGFIV. Topologically, residues 29-55 are cytoplasmic; sequence LINCIDWVSKRELSSVDKLLIILAISR. Residues 56-76 form a helical membrane-spanning segment; sequence IGLIWEILVSWFLALHSLAIF. Residues 77–85 lie on the Extracellular side of the membrane; that stretch reads VSGTGLRIM. The chain crosses the membrane as a helical span at residues 86–106; the sequence is IFSWIVSNHFNLWLATILSIF. Over 107-128 the chain is Cytoplasmic; the sequence is YLLKIASFSSPAFLYLKRRVNK. A helical transmembrane segment spans residues 129–149; it reads VILMILLGTLVFLFLNLIQIN. The Extracellular segment spans residues 150-184; that stretch reads MLIKDWLDRYERNTTWNFSMSDFETFSVSVRFTMT. N-linked (GlcNAc...) asparagine glycans are attached at residues Asn-162 and Asn-166. The helical transmembrane segment at 185–205 threads the bilayer; the sequence is MFSLTPFTVAFISFLLLVFSL. Residues 206–232 lie on the Cytoplasmic side of the membrane; that stretch reads QKHLQKMQLNYKGHRDPRTKVHTNALK. A helical transmembrane segment spans residues 233 to 253; it reads IVISFLLLYASFFLSILISWI. Residues 254 to 261 are Extracellular-facing; that stretch reads SELYQNTV. Residues 262–282 traverse the membrane as a helical segment; sequence IYMLCETIGAFYPSSHSFLLI. Residues 283–303 lie on the Cytoplasmic side of the membrane; the sequence is LGNAKLRQAFLLVAAKVWAKR.

It belongs to the G-protein coupled receptor T2R family.

It localises to the membrane. In terms of biological role, receptor that may play a role in the perception of bitterness and is gustducin-linked. May play a role in sensing the chemical composition of the gastrointestinal content. The activity of this receptor may stimulate alpha gustducin, mediate PLC-beta-2 activation and lead to the gating of TRPM5. In Pan troglodytes (Chimpanzee), this protein is Taste receptor type 2 member 13 (TAS2R13).